We begin with the raw amino-acid sequence, 278 residues long: Thiazole synthase (278 aa).

The active-site Schiff-base intermediate with DXP is the K107. Residues G168, 194-195, and 216-217 each bind 1-deoxy-D-xylulose 5-phosphate; these read AG and AS.

It belongs to the ThiG family. In terms of assembly, homotetramer. Forms heterodimers with either ThiH or ThiS.

It localises to the cytoplasm. The enzyme catalyses [ThiS sulfur-carrier protein]-C-terminal-Gly-aminoethanethioate + 2-iminoacetate + 1-deoxy-D-xylulose 5-phosphate = [ThiS sulfur-carrier protein]-C-terminal Gly-Gly + 2-[(2R,5Z)-2-carboxy-4-methylthiazol-5(2H)-ylidene]ethyl phosphate + 2 H2O + H(+). Its pathway is cofactor biosynthesis; thiamine diphosphate biosynthesis. Its function is as follows. Catalyzes the rearrangement of 1-deoxy-D-xylulose 5-phosphate (DXP) to produce the thiazole phosphate moiety of thiamine. Sulfur is provided by the thiocarboxylate moiety of the carrier protein ThiS. In vitro, sulfur can be provided by H(2)S. The protein is Thiazole synthase of Corynebacterium jeikeium (strain K411).